Consider the following 90-residue polypeptide: Progonadoliberin-3 (90 aa).

A signal peptide spans 1 to 23 (MDVSSKVVVQVLLLALVVQVTLC). Residue Gln-24 is modified to Pyrrolidone carboxylic acid. A Glycine amide modification is found at Gly-33.

The protein belongs to the GnRH family. Expressed in neuron cell bodies of the nucleus olfactoretinalis.

It is found in the secreted. Functionally, stimulates the secretion of gonadotropins. The chain is Progonadoliberin-3 (gnrh3) from Oryzias latipes (Japanese rice fish).